The primary structure comprises 374 residues: uncharacterized protein (374 aa).

The first 23 residues, Met1 to Pro23, serve as a signal peptide directing secretion. The segment at Ser66–Asn374 is disordered.

It localises to the secreted. This is an uncharacterized protein from Dictyostelium discoideum (Social amoeba).